A 266-amino-acid chain; its full sequence is ATP synthase subunit a (266 aa).

Helical transmembrane passes span 33-53 (FWTL…LFLA), 95-115 (VIAP…LMDL), 141-161 (DVNI…FYSI), 206-226 (LFGN…LLPW), and 237-257 (AIFH…LTIV).

The protein belongs to the ATPase A chain family. In terms of assembly, F-type ATPases have 2 components, CF(1) - the catalytic core - and CF(0) - the membrane proton channel. CF(1) has five subunits: alpha(3), beta(3), gamma(1), delta(1), epsilon(1). CF(0) has three main subunits: a(1), b(2) and c(9-12). The alpha and beta chains form an alternating ring which encloses part of the gamma chain. CF(1) is attached to CF(0) by a central stalk formed by the gamma and epsilon chains, while a peripheral stalk is formed by the delta and b chains.

It localises to the cell inner membrane. In terms of biological role, key component of the proton channel; it plays a direct role in the translocation of protons across the membrane. This Klebsiella pneumoniae subsp. pneumoniae (strain ATCC 700721 / MGH 78578) protein is ATP synthase subunit a.